A 336-amino-acid polypeptide reads, in one-letter code: NmrA-like family domain-containing oxidoreductase malD (336 aa).

Residues 12 to 17 (GGTGNQ), 40 to 44 (RDPTS), 61 to 62 (DG), 82 to 84 (TNS), Lys-140, and 163 to 166 (FMEA) each bind NADP(+).

It belongs to the NmrA-type oxidoreductase family.

In terms of biological role, nmrA-like family domain-containing oxidoreductase; part of the gene cluster that mediates the biosynthesis of malbrancheamide, a dichlorinated fungal indole alkaloid that belongs to a family of natural products containing a characteristic bicyclo[2.2.2]diazaoctane core. The first step of malbrancheamide biosynthesis involves coupling of L-proline and L-tryptophan by malG, a bimodular NRPS, to produce L-Pro-L-Trp aldehyde through reductive offloading. This compound undergoes spontaneous cyclization and dehydration to give a dienamine which is reverse prenylated at C-2 by malE. The other prenyltransferase present in the cluster, malB, displays modest activity, suggesting that may be a redundant gene in the pathway. Subsequently, a [4+2] Diels-Alder cyclo-addition catalyzed by the bifunctional enzyme malC forms the characteristic bicyclo[2.2.2]diazaoctane ring of premalbrancheamid. Finally, the flavin-dependent halogenase malA catalyzes the iterative dichlorination of the indole ring of premalbrancheamide to yield C-9 monochlorinated malbrancheamide B, C-8 monochlorinated isomalbrancheamide B, and dichlorinated malbrancheamide. MalA is also able to brominate premalbrancheamide at C-9 to yield malbrancheamide C, and, to a lesser extend, at C-8 to yield isomalbrancheamide C. Finally, malA can brominate C-9 monochlorinated malbrancheamide B at C-8 to yield malbrancheamide D, or C-8 monochlorinated isomalbrancheamide B at C-9 to produce isomalbrancheamide D. This is NmrA-like family domain-containing oxidoreductase malD from Malbranchea aurantiaca.